The following is a 333-amino-acid chain: Phosphate acyltransferase (333 aa).

Belongs to the PlsX family. As to quaternary structure, homodimer. Probably interacts with PlsY.

Its subcellular location is the cytoplasm. It catalyses the reaction a fatty acyl-[ACP] + phosphate = an acyl phosphate + holo-[ACP]. It participates in lipid metabolism; phospholipid metabolism. In terms of biological role, catalyzes the reversible formation of acyl-phosphate (acyl-PO(4)) from acyl-[acyl-carrier-protein] (acyl-ACP). This enzyme utilizes acyl-ACP as fatty acyl donor, but not acyl-CoA. This chain is Phosphate acyltransferase, found in Lactobacillus acidophilus (strain ATCC 700396 / NCK56 / N2 / NCFM).